Here is a 188-residue protein sequence, read N- to C-terminus: dCTP deaminase (188 aa).

109–114 (KSTYAR) lines the dCTP pocket. Residue Glu-135 is the Proton donor/acceptor of the active site. Positions 154, 168, and 178 each coordinate dCTP.

This sequence belongs to the dCTP deaminase family. Homotrimer.

The catalysed reaction is dCTP + H2O + H(+) = dUTP + NH4(+). The protein operates within pyrimidine metabolism; dUMP biosynthesis; dUMP from dCTP (dUTP route): step 1/2. In terms of biological role, catalyzes the deamination of dCTP to dUTP. This is dCTP deaminase from Helicobacter acinonychis (strain Sheeba).